The following is a 327-amino-acid chain: Ribose 1,5-bisphosphate isomerase (327 aa).

Substrate contacts are provided by residues 25-28 and Arg68; that span reads RGAA. Cys133 functions as the Proton acceptor in the catalytic mechanism. Asp202 acts as the Proton donor in catalysis. Substrate-binding positions include 212–213 and Lys238; that span reads NK.

This sequence belongs to the eIF-2B alpha/beta/delta subunits family. R15P isomerase subfamily.

The catalysed reaction is alpha-D-ribose 1,5-bisphosphate = D-ribulose 1,5-bisphosphate. In terms of biological role, isomerase involved in the non-carboxylating pentose bisphosphate pathway, a nucleoside degradation pathway present in some halophilic archaea. Catalyzes the isomerization of ribose 1,5-bisphosphate (R15P) to ribulose 1,5-bisphosphate (RuBP). The protein is Ribose 1,5-bisphosphate isomerase of Haloterrigena turkmenica (strain ATCC 51198 / DSM 5511 / JCM 9101 / NCIMB 13204 / VKM B-1734 / 4k) (Halococcus turkmenicus).